A 117-amino-acid chain; its full sequence is Gamma-aminobutyric acid receptor-associated protein-like 1 (117 aa).

Glycine 116 carries Phosphatidylethanolamine amidated glycine; alternate lipidation. Glycine 116 carries Phosphatidylserine amidated glycine; alternate lipidation. A propeptide (removed in mature form) is located at residue lysine 117.

This sequence belongs to the ATG8 family. As to quaternary structure, interacts with ATG13, OPRK1, RB1CC1 and ULK1. Interacts with TP53INP1 and TP53INP2. Directly interacts with SQSTM1. Interacts with ATG3, ATG7 and MAP15. Interacts with TECPR2. Interacts with TBC1D5. Interacts with MAPK15. Interacts with TRIM5. Interacts with MEFV and TRIM21. Interacts with WDFY3. Interacts with the reticulophagy receptor TEX264. Interacts with UBA5. Interacts with KBTBD6 and KBTBD7; the interaction is direct. Interacts with reticulophagy regulators RETREG1, RETREG2 and RETREG3. Interacts with IRGM. Interacts with DNM2. Interacts with NCOA4 (via C-terminus). In terms of processing, the precursor molecule is cleaved by ATG4 (ATG4A, ATG4B, ATG4C or ATG4D) to expose the glycine at the C-terminus and form the cytosolic form, GABARAPL1-I. The processed form is then activated by APG7L/ATG7, transferred to ATG3 and conjugated to phosphatidylethanolamine (PE) phospholipid to form the membrane-bound form, GABARAPL1-II. During non-canonical autophagy, the processed form is conjugated to phosphatidylserine (PS) phospholipid. ATG4 proteins also mediate the delipidation of PE-conjugated forms required for GABARAPL1 recycling when autophagosomes fuse with lysosomes. In addition, ATG4B and ATG4D mediate delipidation of ATG8 proteins conjugated to PS during non-canonical autophagy. ATG4B constitutes the major protein for proteolytic activation. ATG4D is the main enzyme for delipidation activity.

The protein resides in the cytoplasmic vesicle. It localises to the autophagosome. Its subcellular location is the cytoplasmic vesicle membrane. It is found in the cytoplasm. The protein localises to the cytoskeleton. The protein resides in the endoplasmic reticulum. It localises to the golgi apparatus. In terms of biological role, ubiquitin-like modifier that increases cell-surface expression of kappa-type opioid receptor through facilitating anterograde intracellular trafficking of the receptor. Involved in formation of autophagosomal vacuoles. While LC3s are involved in elongation of the phagophore membrane, the GABARAP/GATE-16 subfamily is essential for a later stage in autophagosome maturation. Through its interaction with the reticulophagy receptor TEX264, participates in the remodeling of subdomains of the endoplasmic reticulum into autophagosomes upon nutrient stress, which then fuse with lysosomes for endoplasmic reticulum turnover. In Pongo abelii (Sumatran orangutan), this protein is Gamma-aminobutyric acid receptor-associated protein-like 1.